Consider the following 1447-residue polypeptide: Calcium-dependent secretion activator (1447 aa).

Acidic residues predominate over residues 1-15 (MIDPSSSEEEGEDDA). Disordered stretches follow at residues 1 to 35 (MIDP…TSAV) and 101 to 163 (DTGN…EEEE). Composition is skewed to polar residues over residues 18-32 (NVSS…TKGT) and 111-126 (GIPS…QSVG). Over residues 127-144 (SSRANSLPRPLSPSPSLT) the composition is skewed to low complexity. A compositionally biased stretch (basic and acidic residues) spans 145-163 (SEKHETAEPHGKHEREEEE). In terms of domain architecture, C2 spans 417-547 (SKYGLQKLKR…PLSSKSPEWH (131 aa)). The PH domain maps to 573–683 (NMKHCGYLYA…WVMAMYRATG (111 aa)). Residues 970–1157 (VDMDRVLSEQ…DMIEQCIQRT (188 aa)) form the MHD1 domain. Over residues 1386-1395 (REGEEEDNGD) the composition is skewed to acidic residues. The interval 1386–1406 (REGEEEDNGDESTSNIPRGLP) is disordered.

Restricted to the nervous system at all stages of development and highly localized at synapses (at protein level).

The protein localises to the cytoplasmic vesicle membrane. The protein resides in the synapse. Its function is as follows. Calcium-binding protein involved in exocytosis of vesicles filled with neurotransmitters and neuropeptides. May specifically mediate the Ca(2+)-dependent exocytosis of large dense-core vesicles (DCVs) and other dense-core vesicles. However, it probably also participates in small clear synaptic vesicles (SVs) exocytosis and it is unclear whether its function is related to Ca(2+) triggering. This is Calcium-dependent secretion activator from Drosophila melanogaster (Fruit fly).